Consider the following 501-residue polypeptide: Probable cytochrome P450 508A4 (501 aa).

The chain crosses the membrane as a helical span at residues methionine 1–tyrosine 21. Residue cysteine 445 coordinates heme.

Belongs to the cytochrome P450 family. Heme serves as cofactor.

It localises to the membrane. The polypeptide is Probable cytochrome P450 508A4 (cyp508A4) (Dictyostelium discoideum (Social amoeba)).